The following is a 319-amino-acid chain: Aspartate carbamoyltransferase catalytic subunit (319 aa).

Residues Arg-65 and Thr-66 each coordinate carbamoyl phosphate. Lys-93 provides a ligand contact to L-aspartate. Residues Arg-115, His-149, and Gln-152 each contribute to the carbamoyl phosphate site. The L-aspartate site is built by Arg-182 and Arg-237. Carbamoyl phosphate is bound by residues Gly-278 and Pro-279.

The protein belongs to the aspartate/ornithine carbamoyltransferase superfamily. ATCase family. In terms of assembly, heterododecamer (2C3:3R2) of six catalytic PyrB chains organized as two trimers (C3), and six regulatory PyrI chains organized as three dimers (R2).

The catalysed reaction is carbamoyl phosphate + L-aspartate = N-carbamoyl-L-aspartate + phosphate + H(+). Its pathway is pyrimidine metabolism; UMP biosynthesis via de novo pathway; (S)-dihydroorotate from bicarbonate: step 2/3. Catalyzes the condensation of carbamoyl phosphate and aspartate to form carbamoyl aspartate and inorganic phosphate, the committed step in the de novo pyrimidine nucleotide biosynthesis pathway. In Janthinobacterium sp. (strain Marseille) (Minibacterium massiliensis), this protein is Aspartate carbamoyltransferase catalytic subunit.